A 208-amino-acid chain; its full sequence is Holliday junction branch migration complex subunit RuvA (208 aa).

The interval 1–63 (MIGMLTGRVE…QDSVTLYGFL (63 aa)) is domain I. Residues 64–142 (DRDSKRVFLQ…LNQSDDASAG (79 aa)) form a domain II region. The flexible linker stretch occupies residues 143–151 (NAPYQPTVD). Residues 151–208 (DAGVEQVVEGLVSLGWRQQDAQRAVNEACAENDVPMPLASDDAPRVLRLALARMDRGR) form a domain III region.

Belongs to the RuvA family. Homotetramer. Forms an RuvA(8)-RuvB(12)-Holliday junction (HJ) complex. HJ DNA is sandwiched between 2 RuvA tetramers; dsDNA enters through RuvA and exits via RuvB. An RuvB hexamer assembles on each DNA strand where it exits the tetramer. Each RuvB hexamer is contacted by two RuvA subunits (via domain III) on 2 adjacent RuvB subunits; this complex drives branch migration. In the full resolvosome a probable DNA-RuvA(4)-RuvB(12)-RuvC(2) complex forms which resolves the HJ.

Its subcellular location is the cytoplasm. Functionally, the RuvA-RuvB-RuvC complex processes Holliday junction (HJ) DNA during genetic recombination and DNA repair, while the RuvA-RuvB complex plays an important role in the rescue of blocked DNA replication forks via replication fork reversal (RFR). RuvA specifically binds to HJ cruciform DNA, conferring on it an open structure. The RuvB hexamer acts as an ATP-dependent pump, pulling dsDNA into and through the RuvAB complex. HJ branch migration allows RuvC to scan DNA until it finds its consensus sequence, where it cleaves and resolves the cruciform DNA. The chain is Holliday junction branch migration complex subunit RuvA from Bifidobacterium longum subsp. infantis (strain ATCC 15697 / DSM 20088 / JCM 1222 / NCTC 11817 / S12).